An 82-amino-acid chain; its full sequence is Small ribosomal subunit protein bS16 (82 aa).

Belongs to the bacterial ribosomal protein bS16 family.

The chain is Small ribosomal subunit protein bS16 from Acidobacterium capsulatum (strain ATCC 51196 / DSM 11244 / BCRC 80197 / JCM 7670 / NBRC 15755 / NCIMB 13165 / 161).